The following is a 201-amino-acid chain: UPF0056 membrane protein PYRAB13050 (201 aa).

Transmembrane regions (helical) follow at residues 8–28 (FAVL…VPIF), 49–69 (ITVL…FKFF), 73–93 (VDAF…EMLS), 111–131 (VAVI…TTVM), 140–160 (PIVI…LASG), and 181–201 (LILT…AFGI).

The protein belongs to the UPF0056 (MarC) family.

The protein localises to the cell membrane. The polypeptide is UPF0056 membrane protein PYRAB13050 (Pyrococcus abyssi (strain GE5 / Orsay)).